We begin with the raw amino-acid sequence, 159 residues long: Probable minor fimbrial protein (159 aa).

Residues 1–6 (MKKMHG) constitute a propeptide, leader sequence. Phe7 carries the N-methylphenylalanine modification. A helical membrane pass occupies residues 7–29 (FTLIELMIVVAIIGVLASIALMQ). 2 disulfide bridges follow: Cys56–Cys71 and Cys140–Cys153.

It belongs to the N-Me-Phe pilin family. The pili are polar flexible filaments of about 5.4 nanometers diameter and 2.5 micrometers average length; they consist of only a single polypeptide chain arranged in a helical configuration of five subunits per turn in the assembled pilus.

The protein localises to the fimbrium. Its subcellular location is the membrane. This chain is Probable minor fimbrial protein (fimZ), found in Dichelobacter nodosus (Bacteroides nodosus).